We begin with the raw amino-acid sequence, 294 residues long: Transcription repressor OFP14 (294 aa).

Residues 49-60 (SFKHRRRSSKTR) show a composition bias toward basic residues. Disordered stretches follow at residues 49–72 (SFKHRRRSSKTRFSKEEPVYHQDS), 96–129 (DDQEDDQHQARVTKNKEKRESSSDDSDDDDDDDD), and 141–185 (AVYD…SRST). Basic and acidic residues-rich tracts occupy residues 61 to 72 (FSKEEPVYHQDS) and 96 to 117 (DDQEDDQHQARVTKNKEKRESS). Acidic residues predominate over residues 118-128 (SDDSDDDDDDD). Low complexity predominate over residues 164-185 (SSEGRPSMETTSTSSERQSRST). Positions 195 to 259 (VLRYTDEPQE…LSAFVDLIIA (65 aa)) constitute an OVATE domain.

In terms of assembly, interacts with KNAT2 and KNAT3. In terms of tissue distribution, expressed in roots, rosette and cauline leaves, shoots, stems, flower buds and siliques.

Its subcellular location is the nucleus. Transcriptional repressor that may regulate multiple aspects of plant growth and development through the regulation of BEL1-LIKE (BLH) and KNOX TALE (KNAT) homeodomain transcription factors. This is Transcription repressor OFP14 (OFP14) from Arabidopsis thaliana (Mouse-ear cress).